The primary structure comprises 614 residues: Dihydroxy-acid dehydratase (614 aa).

Asp81 contacts Mg(2+). Cys122 serves as a coordination point for [2Fe-2S] cluster. Mg(2+) is bound by residues Asp123 and Lys124. At Lys124 the chain carries N6-carboxylysine. Cys195 is a [2Fe-2S] cluster binding site. Glu491 lines the Mg(2+) pocket. Ser517 (proton acceptor) is an active-site residue.

It belongs to the IlvD/Edd family. In terms of assembly, homodimer. It depends on [2Fe-2S] cluster as a cofactor. Requires Mg(2+) as cofactor.

It carries out the reaction (2R)-2,3-dihydroxy-3-methylbutanoate = 3-methyl-2-oxobutanoate + H2O. The catalysed reaction is (2R,3R)-2,3-dihydroxy-3-methylpentanoate = (S)-3-methyl-2-oxopentanoate + H2O. Its pathway is amino-acid biosynthesis; L-isoleucine biosynthesis; L-isoleucine from 2-oxobutanoate: step 3/4. It functions in the pathway amino-acid biosynthesis; L-valine biosynthesis; L-valine from pyruvate: step 3/4. Its function is as follows. Functions in the biosynthesis of branched-chain amino acids. Catalyzes the dehydration of (2R,3R)-2,3-dihydroxy-3-methylpentanoate (2,3-dihydroxy-3-methylvalerate) into 2-oxo-3-methylpentanoate (2-oxo-3-methylvalerate) and of (2R)-2,3-dihydroxy-3-methylbutanoate (2,3-dihydroxyisovalerate) into 2-oxo-3-methylbutanoate (2-oxoisovalerate), the penultimate precursor to L-isoleucine and L-valine, respectively. The protein is Dihydroxy-acid dehydratase of Nitrobacter winogradskyi (strain ATCC 25391 / DSM 10237 / CIP 104748 / NCIMB 11846 / Nb-255).